Reading from the N-terminus, the 1020-residue chain is Probable leucine-rich repeat receptor-like serine/threonine-protein kinase At3g14840 (1020 aa).

Residues methionine 1 to serine 26 form the signal peptide. Over alanine 27–threonine 614 the chain is Extracellular. 2 N-linked (GlcNAc...) asparagine glycosylation sites follow: asparagine 50 and asparagine 81. LRR repeat units follow at residues isoleucine 86–leucine 110, proline 111–serine 134, leucine 136–leucine 157, threonine 158–leucine 181, proline 182–lysine 204, threonine 206–glycine 231, leucine 253–asparagine 276, methionine 277–asparagine 301, arginine 302–glycine 324, and serine 326–glutamine 349. 3 N-linked (GlcNAc...) asparagine glycosylation sites follow: asparagine 124, asparagine 138, and asparagine 156. An N-linked (GlcNAc...) asparagine glycan is attached at asparagine 193. Asparagine 276 and asparagine 289 each carry an N-linked (GlcNAc...) asparagine glycan. N-linked (GlcNAc...) asparagine glycosylation is found at asparagine 359, asparagine 386, asparagine 389, asparagine 417, asparagine 461, asparagine 469, and asparagine 498. An LRR 11 repeat occupies glutamine 479–valine 501. A helical membrane pass occupies residues valine 615–tryptophan 635. Topologically, residues tryptophan 636–threonine 1020 are cytoplasmic. One can recognise a Protein kinase domain in the interval phenylalanine 672–valine 949. ATP-binding positions include isoleucine 678–valine 686 and lysine 700. Tyrosine 745 carries the post-translational modification Phosphotyrosine. Residue aspartate 798 is the Proton acceptor of the active site. Position 831 is a phosphoserine (serine 831). Phosphothreonine occurs at positions 832 and 837. Position 845 is a phosphotyrosine (tyrosine 845).

Belongs to the protein kinase superfamily. Ser/Thr protein kinase family.

Its subcellular location is the cell membrane. The catalysed reaction is L-seryl-[protein] + ATP = O-phospho-L-seryl-[protein] + ADP + H(+). It catalyses the reaction L-threonyl-[protein] + ATP = O-phospho-L-threonyl-[protein] + ADP + H(+). This chain is Probable leucine-rich repeat receptor-like serine/threonine-protein kinase At3g14840 (LRR-RLK), found in Arabidopsis thaliana (Mouse-ear cress).